The sequence spans 921 residues: Isoleucine--tRNA ligase (921 aa).

Positions 57–67 (PYANGDIHMGH) match the 'HIGH' region motif. Glu552 is a binding site for L-isoleucyl-5'-AMP. The short motif at 593–597 (KMSKS) is the 'KMSKS' region element. Lys596 lines the ATP pocket. Residues Cys887, Cys890, Cys907, and Cys910 each contribute to the Zn(2+) site.

The protein belongs to the class-I aminoacyl-tRNA synthetase family. IleS type 1 subfamily. Monomer. The cofactor is Zn(2+).

The protein localises to the cytoplasm. The enzyme catalyses tRNA(Ile) + L-isoleucine + ATP = L-isoleucyl-tRNA(Ile) + AMP + diphosphate. In terms of biological role, catalyzes the attachment of isoleucine to tRNA(Ile). As IleRS can inadvertently accommodate and process structurally similar amino acids such as valine, to avoid such errors it has two additional distinct tRNA(Ile)-dependent editing activities. One activity is designated as 'pretransfer' editing and involves the hydrolysis of activated Val-AMP. The other activity is designated 'posttransfer' editing and involves deacylation of mischarged Val-tRNA(Ile). The chain is Isoleucine--tRNA ligase from Halalkalibacterium halodurans (strain ATCC BAA-125 / DSM 18197 / FERM 7344 / JCM 9153 / C-125) (Bacillus halodurans).